The chain runs to 412 residues: FAD-dependent monooxygenase nscC (412 aa).

Residues 1–21 (MGKQQETILIIGAGIAGLTTS) form the signal peptide. Positions 35 and 46 each coordinate FAD. A glycan (N-linked (GlcNAc...) asparagine) is linked at N92. R119 serves as a coordination point for FAD. 2 N-linked (GlcNAc...) asparagine glycosylation sites follow: N170 and N231. The FAD site is built by D326 and G339.

This sequence belongs to the paxM FAD-dependent monooxygenase family. FAD serves as cofactor.

The protein operates within secondary metabolite biosynthesis. Its function is as follows. FAD-dependent monooxygenase; part of the gene cluster that mediates the biosynthesis of neosartoricin B, a prenylated anthracenone that probably exhibits T-cell antiproliferative activity, suggestive of a physiological role as an immunosuppressive agent. The non-reducing polyketide synthase nscA probably synthesizes and cyclizes the decaketide backbone. The hydrolase nscB then mediates the product release through hydrolysis followed by spontaneous decarboxylation. The prenyltransferase nscD catalyzes the addition of the dimethylallyl group to the aromatic C5. The FAD-dependent monooxygenase nscC is then responsible for the stereospecific hydroxylation at C2. Neosartoricin B can be converted into two additional compounds neosartoricins C and D. Neosartoricin C is a spirocyclic compound that is cyclized through the attack of C3 hydroxyl on C14, followed by dehydration. On the other hand, neosartoricin D is a further cyclized compound in which attack of C2 on C14 in neosartoricin C results in the formation of the acetal-containing dioxabicyclo-octanone ring. Both of these compounds are novel and possibly represent related metabolites of the gene cluster. The polypeptide is FAD-dependent monooxygenase nscC (Arthroderma benhamiae (strain ATCC MYA-4681 / CBS 112371) (Trichophyton mentagrophytes)).